The chain runs to 112 residues: Large ribosomal subunit protein uL22 (112 aa).

This sequence belongs to the universal ribosomal protein uL22 family. Part of the 50S ribosomal subunit.

Functionally, this protein binds specifically to 23S rRNA; its binding is stimulated by other ribosomal proteins, e.g. L4, L17, and L20. It is important during the early stages of 50S assembly. It makes multiple contacts with different domains of the 23S rRNA in the assembled 50S subunit and ribosome. In terms of biological role, the globular domain of the protein is located near the polypeptide exit tunnel on the outside of the subunit, while an extended beta-hairpin is found that lines the wall of the exit tunnel in the center of the 70S ribosome. In Nitratidesulfovibrio vulgaris (strain DSM 19637 / Miyazaki F) (Desulfovibrio vulgaris), this protein is Large ribosomal subunit protein uL22.